The sequence spans 61 residues: MSDKTIRIIQVRSVIGCTKKQKATIKALGLGRPNYQVEKQDNPCLRGQIRVVQHLVKVEEL.

The protein belongs to the universal ribosomal protein uL30 family. In terms of assembly, part of the 50S ribosomal subunit.

The polypeptide is Large ribosomal subunit protein uL30 (Chlorobium limicola (strain DSM 245 / NBRC 103803 / 6330)).